The sequence spans 58 residues: Small ribosomal subunit protein bS21 (58 aa).

Positions 31-58 are disordered; that stretch reads DLKRIRHHETPVEKYKRKAQQRRRSRRR. Over residues 45–58 the composition is skewed to basic residues; sequence YKRKAQQRRRSRRR.

This sequence belongs to the bacterial ribosomal protein bS21 family.

This is Small ribosomal subunit protein bS21 from Prochlorococcus marinus (strain MIT 9303).